The primary structure comprises 358 residues: Magnesium-protoporphyrin IX monomethyl ester [oxidative] cyclase 3 (358 aa).

It belongs to the AcsF family. Fe cation serves as cofactor.

The enzyme catalyses Mg-protoporphyrin IX 13-monomethyl ester + 3 NADPH + 3 O2 + 2 H(+) = 3,8-divinyl protochlorophyllide a + 3 NADP(+) + 5 H2O. It participates in porphyrin-containing compound metabolism; chlorophyll biosynthesis (light-independent). Functionally, catalyzes the formation of the isocyclic ring in chlorophyll biosynthesis. Mediates the cyclase reaction, which results in the formation of divinylprotochlorophyllide (Pchlide) characteristic of all chlorophylls from magnesium-protoporphyrin IX 13-monomethyl ester (MgPMME). This is Magnesium-protoporphyrin IX monomethyl ester [oxidative] cyclase 3 from Nostoc sp. (strain PCC 7120 / SAG 25.82 / UTEX 2576).